The sequence spans 178 residues: Large ribosomal subunit protein uL6 (178 aa).

Belongs to the universal ribosomal protein uL6 family. Part of the 50S ribosomal subunit. Interacts weakly with protein L13.

Functionally, this protein binds to the 23S rRNA, and is important in its secondary structure. It is located near the subunit interface in the base of the L7/L12 stalk, and near the tRNA binding site of the peptidyltransferase center. The polypeptide is Large ribosomal subunit protein uL6 (Haloarcula marismortui (strain ATCC 43049 / DSM 3752 / JCM 8966 / VKM B-1809) (Halobacterium marismortui)).